A 338-amino-acid polypeptide reads, in one-letter code: Ketol-acid reductoisomerase (NADP(+)) (338 aa).

The KARI N-terminal Rossmann domain maps to 1–181; that stretch reads MKVFYDKDAD…GGGRAGIIET (181 aa). Residues 24–27, arginine 47, and serine 52 contribute to the NADP(+) site; that span reads YGSQ. Histidine 107 is a catalytic residue. Glycine 133 serves as a coordination point for NADP(+). The region spanning 182–327 is the KARI C-terminal knotted domain; sequence NFREETETDL…AKLRSMMPWI (146 aa). Mg(2+)-binding residues include aspartate 190, glutamate 194, glutamate 226, and glutamate 230. Serine 251 contributes to the substrate binding site.

Belongs to the ketol-acid reductoisomerase family. The cofactor is Mg(2+).

It catalyses the reaction (2R)-2,3-dihydroxy-3-methylbutanoate + NADP(+) = (2S)-2-acetolactate + NADPH + H(+). The catalysed reaction is (2R,3R)-2,3-dihydroxy-3-methylpentanoate + NADP(+) = (S)-2-ethyl-2-hydroxy-3-oxobutanoate + NADPH + H(+). It functions in the pathway amino-acid biosynthesis; L-isoleucine biosynthesis; L-isoleucine from 2-oxobutanoate: step 2/4. It participates in amino-acid biosynthesis; L-valine biosynthesis; L-valine from pyruvate: step 2/4. Involved in the biosynthesis of branched-chain amino acids (BCAA). Catalyzes an alkyl-migration followed by a ketol-acid reduction of (S)-2-acetolactate (S2AL) to yield (R)-2,3-dihydroxy-isovalerate. In the isomerase reaction, S2AL is rearranged via a Mg-dependent methyl migration to produce 3-hydroxy-3-methyl-2-ketobutyrate (HMKB). In the reductase reaction, this 2-ketoacid undergoes a metal-dependent reduction by NADPH to yield (R)-2,3-dihydroxy-isovalerate. In Paraburkholderia phytofirmans (strain DSM 17436 / LMG 22146 / PsJN) (Burkholderia phytofirmans), this protein is Ketol-acid reductoisomerase (NADP(+)).